The chain runs to 247 residues: Sortase A (247 aa).

At M1–G9 the chain is on the cytoplasmic side. Residues F10–V30 traverse the membrane as a helical segment. The Extracellular segment spans residues F31–L247. The active-site Proton donor/acceptor is the H140. Residue C206 is the Acyl-thioester intermediate of the active site.

It belongs to the bacterial sortase family. Class A subfamily.

It localises to the cell membrane. In terms of biological role, transpeptidase that anchors surface proteins to the cell wall. Recognizes and modifies its substrate by proteolytic cleavage of a C-terminal sorting signal. Following cleavage, a covalent intermediate is formed via a thioester bond between the sortase and its substrate, which is then transferred and covalently attached to the cell wall. This sortase recognizes a Leu-Pro-x-Thr-Gly (LPXTG) motif, which is cleaved by the sortase between the threonine and glycine residues. Essential for adherence to eukaryotic cells and for binding to fibronectin and fibrinogen. The chain is Sortase A from Streptococcus agalactiae serotype III (strain NEM316).